Reading from the N-terminus, the 1336-residue chain is Adhesion G protein-coupled receptor A2 (1336 aa).

The signal sequence occupies residues 1–33 (MGAGGRRMPVPPARLLLLPLLPCLLLLAPGTRG). Residues 34 to 769 (APGCPVPIRG…AGGSGAGLHP (736 aa)) are Extracellular-facing. N-linked (GlcNAc...) asparagine glycans are attached at residues Asn-84 and Asn-101. 4 LRR repeats span residues 85-106 (GTITLLLSNNKITGLRNGSFLG), 109-130 (LLEKLDLRSNVISTVQPGAFLG), 133-154 (ELKRLDLSNNRIGCLTSETFQG), and 157-178 (RLLRLNISGNIYSSLQPGVFDE). Asn-162 is a glycosylation site (N-linked (GlcNAc...) asparagine). In terms of domain architecture, LRRCT spans 190–241 (EFLTCDCRLRWLLPWARNHSLQLSERTLCAYPSALHAHALSSLQESQLRCEG). One can recognise an Ig-like domain in the interval 247–344 (THYLIPSLRQ…GNTSKKVEIV (98 aa)). An intrachain disulfide couples Cys-268 to Cys-328. A glycan (N-linked (GlcNAc...) asparagine) is linked at Asn-275. The RGD signature appears at 362–364 (RGD). The GAIN-B domain maps to 594-757 (FRCTTGRPNI…AVLMELNAFP (164 aa)). Residues Asn-602, Asn-691, and Asn-735 are each glycosylated (N-linked (GlcNAc...) asparagine). Residues 711 to 757 (AAWWNQDGPGGWSSEGCRLRYSQPNVSSLYCQHLGNVAVLMELNAFP) form a GPS region. An intrachain disulfide couples Cys-727 to Cys-741. The helical transmembrane segment at 770-790 (VVYPCTALLLLCLFSTIITYI) threads the bilayer. Topologically, residues 791–805 (LNHSSIHVSRKGWHM) are cytoplasmic. A helical membrane pass occupies residues 806-826 (LLNLCFHMAMTSAVFVGGVTL). Residues 827–830 (TNYQ) lie on the Extracellular side of the membrane. Residues 831-851 (MVCQAVGITLHYSSLSSLLWM) form a helical membrane-spanning segment. Over 852-884 (GVKARVLHKELSWRAPPLEEGEAAPPGPRPMLR) the chain is Cytoplasmic. Residues 885–905 (FYLIAGGIPLIICGITAAVNI) form a helical membrane-spanning segment. The Extracellular portion of the chain corresponds to 906 to 922 (HNYRDHSPYCWLVWRPS). The helical transmembrane segment at 923 to 943 (LGAFYIPVALILPITWIYFLC) threads the bilayer. The Cytoplasmic segment spans residues 944-1016 (AGLHLRSHVA…DGVYSPGVQL (73 aa)). The helical transmembrane segment at 1017-1037 (GALMTTHFLYLAMWACGALAV) threads the bilayer. Residues 1038-1044 (SQRWLPR) are Extracellular-facing. Residues 1045-1065 (VVCSCLYGVAASALGLFVFTH) traverse the membrane as a helical segment. Residues 1066 to 1336 (HCARRRDVRA…TGLWKSETTV (271 aa)) lie on the Cytoplasmic side of the membrane. The segment covering 1084-1095 (ASPSASHVPARA) has biased composition (low complexity). The disordered stretch occupies residues 1084-1310 (ASPSASHVPA…NGAPKGGKYE (227 aa)). Position 1104 is a phosphoserine (Ser-1104). The segment covering 1110–1124 (GPASLKSSPSGSSGR) has biased composition (low complexity). Positions 1133–1143 (TNLQVAQSQVC) are enriched in polar residues. Residues 1166-1186 (PRHHNNLHHGRRVHKSRAKGH) are compositionally biased toward basic residues. Residues 1213 to 1234 (SSESGSLHNSPSDSYPGSSRNS) show a composition bias toward polar residues. The short motif at 1333-1336 (ETTV) is the PDZ-binding element.

Belongs to the G-protein coupled receptor 2 family. Adhesion G-protein coupled receptor (ADGR) subfamily. Interacts with RECK; the interaction is direct. Interacts (via PDZ-binding motif) with DLG1 (via PDZ domains). The cleaved extracellular subunit interacts with the integrin heterodimer ITGAV:ITGB3. In terms of processing, glycosylated. Post-translationally, proteolytically cleaved into two subunits, an extracellular subunit and a seven-transmembrane subunit. Cleaved by thrombin (F2) and MMP1. Also cleaved by MMP9, with lower efficiency. Presence of the protein disulfide-isomerase P4HB at the cell surface is additionally required for shedding of the extracellular subunit, suggesting that the subunits are linked by disulfide bonds. Shedding is enhanced by the growth factor FGF2 and may promote cell survival during angiogenesis. As to expression, abundantly expressed in the vasculature of the developing embryo. Expression in normal adult tissues is specifically vascular with endothelial expression in CNS, including brain and retina and more widespread pericyte expression in the brain and organs, including the kidney, pancreas and corpus luteum.

Its subcellular location is the cell membrane. The protein resides in the cell projection. It localises to the filopodium. Functionally, endothelial receptor which functions together with RECK to enable brain endothelial cells to selectively respond to Wnt7 signals (WNT7A or WNT7B). Plays a key role in Wnt7-specific responses, such as endothelial cell sprouting and migration in the forebrain and neural tube, and establishment of the blood-brain barrier. Acts as a Wnt7-specific coactivator of canonical Wnt signaling: required to deliver RECK-bound Wnt7 to frizzled by assembling a higher-order RECK-ADGRA2-Fzd-LRP5-LRP6 complex. ADGRA2-tethering function does not rely on its G-protein coupled receptor (GPCR) structure but instead on its combined capacity to interact with RECK extracellularly and recruit the Dishevelled scaffolding protein intracellularly. Binds to the glycosaminoglycans heparin, heparin sulfate, chondroitin sulfate and dermatan sulfate. The polypeptide is Adhesion G protein-coupled receptor A2 (Mus musculus (Mouse)).